Consider the following 957-residue polypeptide: Glycine dehydrogenase (decarboxylating) (957 aa).

Residue K708 is modified to N6-(pyridoxal phosphate)lysine.

Belongs to the GcvP family. As to quaternary structure, the glycine cleavage system is composed of four proteins: P, T, L and H. Pyridoxal 5'-phosphate serves as cofactor.

It carries out the reaction N(6)-[(R)-lipoyl]-L-lysyl-[glycine-cleavage complex H protein] + glycine + H(+) = N(6)-[(R)-S(8)-aminomethyldihydrolipoyl]-L-lysyl-[glycine-cleavage complex H protein] + CO2. The glycine cleavage system catalyzes the degradation of glycine. The P protein binds the alpha-amino group of glycine through its pyridoxal phosphate cofactor; CO(2) is released and the remaining methylamine moiety is then transferred to the lipoamide cofactor of the H protein. The polypeptide is Glycine dehydrogenase (decarboxylating) (Salmonella typhi).